Reading from the N-terminus, the 245-residue chain is Sugar fermentation stimulation protein homolog (245 aa).

The protein belongs to the SfsA family.

The protein is Sugar fermentation stimulation protein homolog of Yersinia pseudotuberculosis serotype I (strain IP32953).